The chain runs to 445 residues: Phosphoglucosamine mutase (445 aa).

Catalysis depends on Ser101, which acts as the Phosphoserine intermediate. The Mg(2+) site is built by Ser101, Asp240, Asp242, and Asp244. Ser101 is subject to Phosphoserine.

The protein belongs to the phosphohexose mutase family. The cofactor is Mg(2+). In terms of processing, activated by phosphorylation.

It carries out the reaction alpha-D-glucosamine 1-phosphate = D-glucosamine 6-phosphate. In terms of biological role, catalyzes the conversion of glucosamine-6-phosphate to glucosamine-1-phosphate. The protein is Phosphoglucosamine mutase of Azotobacter vinelandii (strain DJ / ATCC BAA-1303).